A 276-amino-acid polypeptide reads, in one-letter code: Undecaprenyl-diphosphatase (276 aa).

8 consecutive transmembrane segments (helical) span residues 1 to 21, 39 to 59, 84 to 104, 115 to 135, 159 to 179, 190 to 210, 222 to 242, and 253 to 273; these read MSWL…FLPV, AGAS…LVYF, YRLG…GLLL, LWAI…AEYF, LALL…LFLG, FLLA…DAFA, QLLV…AWFL, and FVGY…TGVV.

It belongs to the UppP family.

The protein localises to the cell membrane. It carries out the reaction di-trans,octa-cis-undecaprenyl diphosphate + H2O = di-trans,octa-cis-undecaprenyl phosphate + phosphate + H(+). In terms of biological role, catalyzes the dephosphorylation of undecaprenyl diphosphate (UPP). Confers resistance to bacitracin. This Mycobacterium sp. (strain KMS) protein is Undecaprenyl-diphosphatase.